The chain runs to 204 residues: Ribonuclease HII (204 aa).

The RNase H type-2 domain occupies 13 to 204; it reads GPVAGCDEAG…VRRAARLHSS (192 aa). Residues Asp-19, Glu-20, and Asp-113 each coordinate a divalent metal cation.

Belongs to the RNase HII family. The cofactor is Mn(2+). Requires Mg(2+) as cofactor.

Its subcellular location is the cytoplasm. It catalyses the reaction Endonucleolytic cleavage to 5'-phosphomonoester.. Its function is as follows. Endonuclease that specifically degrades the RNA of RNA-DNA hybrids. This is Ribonuclease HII from Cutibacterium acnes (strain DSM 16379 / KPA171202) (Propionibacterium acnes).